The primary structure comprises 247 residues: Adenosylcobinamide-GDP ribazoletransferase (247 aa).

5 consecutive transmembrane segments (helical) span residues 34 to 54 (IITF…VFMA), 59 to 79 (FGVP…TGGF), 113 to 133 (GGLA…ELAL), 138 to 158 (ILAS…LLMY), and 194 to 214 (VLLP…AIFI).

Belongs to the CobS family. Requires Mg(2+) as cofactor.

The protein resides in the cell inner membrane. It catalyses the reaction alpha-ribazole + adenosylcob(III)inamide-GDP = adenosylcob(III)alamin + GMP + H(+). It carries out the reaction alpha-ribazole 5'-phosphate + adenosylcob(III)inamide-GDP = adenosylcob(III)alamin 5'-phosphate + GMP + H(+). It functions in the pathway cofactor biosynthesis; adenosylcobalamin biosynthesis; adenosylcobalamin from cob(II)yrinate a,c-diamide: step 7/7. Its function is as follows. Joins adenosylcobinamide-GDP and alpha-ribazole to generate adenosylcobalamin (Ado-cobalamin). Also synthesizes adenosylcobalamin 5'-phosphate from adenosylcobinamide-GDP and alpha-ribazole 5'-phosphate. The protein is Adenosylcobinamide-GDP ribazoletransferase of Escherichia coli O17:K52:H18 (strain UMN026 / ExPEC).